A 73-amino-acid polypeptide reads, in one-letter code: Probable cytochrome b-c1 complex subunit 8 (73 aa).

At 1–42 (MGQASKVFGKQITYSVSPFQQKLFVNYFKNAIPHLRRGVKDN) the chain is on the mitochondrial matrix side. Residues 43 to 60 (FFCSVPYFAALYITVNWA) traverse the membrane as a helical segment. At 61–73 (NETYHNEMKDHWY) the chain is on the mitochondrial intermembrane side.

It belongs to the UQCRQ/QCR8 family. In terms of assembly, component of the ubiquinol-cytochrome c oxidoreductase (cytochrome b-c1 complex, complex III, CIII), a multisubunit enzyme composed of 3 respiratory subunits cytochrome b, cytochrome c1 and Rieske protein, 2 core protein subunits, and additional low-molecular weight protein subunits. The complex exists as an obligatory dimer and forms supercomplexes (SCs) in the inner mitochondrial membrane with cytochrome c oxidase (complex IV, CIV).

The protein resides in the mitochondrion inner membrane. Functionally, component of the ubiquinol-cytochrome c oxidoreductase, a multisubunit transmembrane complex that is part of the mitochondrial electron transport chain which drives oxidative phosphorylation. The respiratory chain contains 3 multisubunit complexes succinate dehydrogenase (complex II, CII), ubiquinol-cytochrome c oxidoreductase (cytochrome b-c1 complex, complex III, CIII) and cytochrome c oxidase (complex IV, CIV), that cooperate to transfer electrons derived from NADH and succinate to molecular oxygen, creating an electrochemical gradient over the inner membrane that drives transmembrane transport and the ATP synthase. The cytochrome b-c1 complex catalyzes electron transfer from ubiquinol to cytochrome c, linking this redox reaction to translocation of protons across the mitochondrial inner membrane, with protons being carried across the membrane as hydrogens on the quinol. In the process called Q cycle, 2 protons are consumed from the matrix, 4 protons are released into the intermembrane space and 2 electrons are passed to cytochrome c. The chain is Probable cytochrome b-c1 complex subunit 8 from Dictyostelium discoideum (Social amoeba).